Here is a 143-residue protein sequence, read N- to C-terminus: Small ribosomal subunit protein uS12 (143 aa).

The span at 1–19 (MGKPRGIRTARKHVNHRRE) shows a compositional bias: basic residues. Residues 1 to 21 (MGKPRGIRTARKHVNHRREQR) are disordered. Position 62 is a hydroxyproline (proline 62).

It belongs to the universal ribosomal protein uS12 family. Component of the 40S small ribosomal subunit.

Its subcellular location is the cytoplasm. The protein localises to the cytosol. It localises to the rough endoplasmic reticulum. The protein is Small ribosomal subunit protein uS12 (RpS23) of Papilio dardanus (African swallowtail butterfly).